The primary structure comprises 548 residues: WAP, Kazal, immunoglobulin, Kunitz and NTR domain-containing protein 1 (548 aa).

A signal peptide spans 1–19 (MPALRPLLPLLLLLRLTSG). One can recognise a WAP domain in the interval 26–79 (LGSHPGVCPNQLSPNLWVDAQSTCERECSRDQDCAAAEKCCINVCGLHSCVAAR). Intrachain disulfides connect Cys-33–Cys-66, Cys-49–Cys-70, Cys-53–Cys-65, Cys-59–Cys-75, Cys-116–Cys-146, Cys-120–Cys-139, and Cys-128–Cys-157. In terms of domain architecture, Kazal-like spans 108 to 159 (WDGQPVCRCRDRCEKEPSFTCASDGLTYYNRCYMDAEACLRGLHLHIVPCKH). The disordered stretch occupies residues 164–184 (PPSSPGPPETTARPTPGAAPV). In terms of domain architecture, Ig-like C2-type spans 186–279 (PALYSSPSPQ…GLLRADFPLS (94 aa)). 10 disulfide bridges follow: Cys-207-Cys-263, Cys-299-Cys-351, Cys-306-Cys-334, Cys-326-Cys-347, Cys-359-Cys-409, Cys-368-Cys-392, Cys-384-Cys-405, Cys-417-Cys-489, Cys-420-Cys-491, and Cys-431-Cys-540. BPTI/Kunitz inhibitor domains are found at residues 299 to 351 (CLPD…QQAC) and 359 to 409 (CVLP…EDAC). In terms of domain architecture, NTR spans 409–540 (CPVPRTPPCR…ILELLEKQAC (132 aa)). Asn-493 is a glycosylation site (N-linked (GlcNAc...) asparagine).

It belongs to the WFIKKN family. Expressed in pancreas, kidney, liver, placenta, and lung.

It localises to the secreted. Protease-inhibitor that contains multiple distinct protease inhibitor domains. Probably has serine protease- and metalloprotease-inhibitor activity. The polypeptide is WAP, Kazal, immunoglobulin, Kunitz and NTR domain-containing protein 1 (WFIKKN1) (Homo sapiens (Human)).